A 412-amino-acid chain; its full sequence is DnaJ homolog subfamily A member 2 (412 aa).

Positions 8 to 70 (KLYDILGVPP…EKRELYDRYG (63 aa)) constitute a J domain. At lysine 39 the chain carries N6-acetyllysine. 2 positions are modified to phosphoserine: serine 78 and serine 123. The CR-type zinc-finger motif lies at 130 to 214 (GKTTKLQLSK…CEGKKVIKEV (85 aa)). Lysine 134 participates in a covalent cross-link: Glycyl lysine isopeptide (Lys-Gly) (interchain with G-Cter in SUMO2). Residues cysteine 143 and cysteine 146 each contribute to the Zn(2+) site. The stretch at 143-150 (CSACSGQG) is one CXXCXGXG motif repeat. Lysine 152 is subject to N6-acetyllysine. The Zn(2+) site is built by cysteine 159, cysteine 162, cysteine 186, cysteine 189, cysteine 202, and cysteine 205. 3 CXXCXGXG motif repeats span residues 159–166 (CSACRGRG), 186–193 (CSDCNGEG), and 202–209 (CKKCEGKK). The tract at residues 359–412 (PEVPNIIGDTEEVELQEFDSTRGSGGGQRREAYNDSSDEESSSHHGPGVQCAHQ) is disordered. Tyrosine 391 carries the phosphotyrosine modification. Phosphoserine occurs at positions 394 and 395. At cysteine 409 the chain carries Cysteine methyl ester. Residue cysteine 409 is the site of S-farnesyl cysteine attachment. A propeptide spans 410 to 412 (AHQ) (removed in mature form).

The protein resides in the membrane. Co-chaperone of Hsc70. Stimulates ATP hydrolysis and the folding of unfolded proteins mediated by HSPA1A/B (in vitro). The sequence is that of DnaJ homolog subfamily A member 2 (DNAJA2) from Bos taurus (Bovine).